Consider the following 356-residue polypeptide: Isopentenyl-diphosphate delta-isomerase (356 aa).

Position 8–9 (8–9) interacts with substrate; the sequence is RK. Residues 66–68, Ser96, and Asn124 each bind FMN; that span reads AIT. 96–98 is a binding site for substrate; sequence SQR. A substrate-binding site is contributed by Gln160. Glu161 serves as a coordination point for Mg(2+). FMN contacts are provided by residues Lys201, Thr231, 280–282, and 301–302; these read GIR and AL.

Belongs to the IPP isomerase type 2 family. As to quaternary structure, homooctamer. Dimer of tetramers. Requires FMN as cofactor. NADPH serves as cofactor. Mg(2+) is required as a cofactor.

Its subcellular location is the cytoplasm. It carries out the reaction isopentenyl diphosphate = dimethylallyl diphosphate. In terms of biological role, involved in the biosynthesis of isoprenoids. Catalyzes the 1,3-allylic rearrangement of the homoallylic substrate isopentenyl (IPP) to its allylic isomer, dimethylallyl diphosphate (DMAPP). The protein is Isopentenyl-diphosphate delta-isomerase of Methanococcus aeolicus (strain ATCC BAA-1280 / DSM 17508 / OCM 812 / Nankai-3).